A 537-amino-acid polypeptide reads, in one-letter code: MEAAPSEKVPAKKLSSSENLDIGVSEVVTVDAAENNSNGIKRGLKTRHVSMMALAGIIGPGVFIGMGSALHIGGPVGLIVGFAIVSIVVFGVMLSIGEFNSLFDFNFNTHAARWVDPAFGAAIGWNYVIVWLTNIAAEYTSLTSILQYWGPHVPSYGFFLIFWGFFTCYQMLGVSVFGESEYILAFIKLLFITGFYIFAIIYAAGGIPHHKPPNLFKEMPLAHGFGGIVSAFVYAGVFFSGVESVSMTAAESKNPKKAIPLAVRQTFWRILYVYFGISISYGITVAWNDPNLSSGSKTLKSPMTIAIMNAGWNHAGDFVNAVILITCLSSINSGIYIGSRSLYNLAKDGMAPKIFKRVDKRGVPWVAVHSVHLFGFLSIMNYSTGAVKAYGYIINLAGVSAFIVWTAIIFVHFRFRRGWVKQGYALSDLPFKSPLYPFPQLIGFVIGIILTLVQGWTVFKPFAAGDFVDAYILLPLFFVIWLSYKFIKKTKWVSYEDMDFINGRRVIEPTYSNEQSSDKETEDGKKTSFWNRVWKEV.

10 helical membrane passes run 52 to 72, 76 to 96, 157 to 177, 183 to 203, 219 to 239, 267 to 287, 318 to 338, 362 to 382, 393 to 413, and 462 to 482; these read MALA…ALHI, VGLI…MLSI, GFFL…VSVF, ILAF…IIYA, MPLA…GVFF, FWRI…TVAW, FVNA…IYIG, GVPW…IMNY, IINL…FVHF, and FAAG…VIWL.

It belongs to the amino acid-polyamine-organocation (APC) superfamily.

The protein resides in the membrane. This is an uncharacterized protein from Schizosaccharomyces pombe (strain 972 / ATCC 24843) (Fission yeast).